Reading from the N-terminus, the 538-residue chain is Sterol esterase 2 (538 aa).

Over 1-11 the chain is Cytoplasmic; it reads MVNKVVDEVQR. A helical; Signal-anchor for type II membrane protein transmembrane segment spans residues 12–32; sequence LVSAIILTSFMTGLFILSLWK. The Lumenal segment spans residues 33–538; the sequence is NYVTVHFQHK…IENLRFPNAR (506 aa). The segment at 42-87 is disordered; sequence KNDPRDTRSSRTKIQPNDKKKKRPARHSRPLSISSTTPLDLQRDQE. Basic residues predominate over residues 60 to 70; that stretch reads KKKKRPARHSR. Phosphoserine occurs at positions 73 and 107. The active-site Nucleophile is serine 287. Residues aspartate 480 and histidine 511 each act as charge relay system in the active site.

Belongs to the AB hydrolase superfamily. Post-translationally, not glycosylated.

Its subcellular location is the cell membrane. It carries out the reaction a sterol ester + H2O = a sterol + a fatty acid + H(+). Functionally, mediates the hydrolysis of steryl esters. Required for mobilization of steryl ester, thereby playing a central role in lipid metabolism. In Saccharomyces cerevisiae (strain ATCC 204508 / S288c) (Baker's yeast), this protein is Sterol esterase 2 (YEH2).